The chain runs to 262 residues: Small ribosomal subunit protein eS4x (262 aa).

The S4 RNA-binding domain occupies 42–104 (LPLVLIIRNR…TNENFRLLYD (63 aa)).

Belongs to the eukaryotic ribosomal protein eS4 family.

It is found in the cytoplasm. This chain is Small ribosomal subunit protein eS4x (RPS4D), found in Arabidopsis thaliana (Mouse-ear cress).